A 136-amino-acid chain; its full sequence is ATP synthase epsilon chain (136 aa).

It belongs to the ATPase epsilon chain family. As to quaternary structure, F-type ATPases have 2 components, CF(1) - the catalytic core - and CF(0) - the membrane proton channel. CF(1) has five subunits: alpha(3), beta(3), gamma(1), delta(1), epsilon(1). CF(0) has three main subunits: a, b and c.

It is found in the cell membrane. Produces ATP from ADP in the presence of a proton gradient across the membrane. In Macrococcus caseolyticus (strain JCSC5402) (Macrococcoides caseolyticum), this protein is ATP synthase epsilon chain.